The sequence spans 564 residues: Proline--tRNA ligase (564 aa).

This sequence belongs to the class-II aminoacyl-tRNA synthetase family. ProS type 1 subfamily. Homodimer.

The protein localises to the cytoplasm. The catalysed reaction is tRNA(Pro) + L-proline + ATP = L-prolyl-tRNA(Pro) + AMP + diphosphate. Catalyzes the attachment of proline to tRNA(Pro) in a two-step reaction: proline is first activated by ATP to form Pro-AMP and then transferred to the acceptor end of tRNA(Pro). As ProRS can inadvertently accommodate and process non-cognate amino acids such as alanine and cysteine, to avoid such errors it has two additional distinct editing activities against alanine. One activity is designated as 'pretransfer' editing and involves the tRNA(Pro)-independent hydrolysis of activated Ala-AMP. The other activity is designated 'posttransfer' editing and involves deacylation of mischarged Ala-tRNA(Pro). The misacylated Cys-tRNA(Pro) is not edited by ProRS. The sequence is that of Proline--tRNA ligase from Bacillus subtilis (strain 168).